We begin with the raw amino-acid sequence, 196 residues long: Small heat shock protein C3 (196 aa).

Positions 88–196 (SAYSSSAIRT…EKDAKEIPIQ (109 aa)) constitute a sHSP domain.

Belongs to the small heat shock protein (HSP20) family.

This is Small heat shock protein C3 (hspc3-1) from Rickettsia felis (strain ATCC VR-1525 / URRWXCal2) (Rickettsia azadi).